Here is a 356-residue protein sequence, read N- to C-terminus: Tyrosine recombinase XerS (356 aa).

Positions 16-121 constitute a Core-binding (CB) domain; sequence IMPWYVLDYY…ALSSLYKYLT (106 aa). The Tyr recombinase domain maps to 169-354; the sequence is AFLDYVDKEY…VNDEQKTALD (186 aa). Residues Arg-210, Lys-234, His-306, Arg-309, and His-332 contribute to the active site. The active-site O-(3'-phospho-DNA)-tyrosine intermediate is the Tyr-341.

Belongs to the 'phage' integrase family. XerS subfamily.

It is found in the cytoplasm. With respect to regulation, ftsK is required for recombination. Its function is as follows. Site-specific tyrosine recombinase, which acts by catalyzing the cutting and rejoining of the recombining DNA molecules. Essential to convert dimers of the bacterial chromosome into monomers to permit their segregation at cell division. In Streptococcus pyogenes serotype M12 (strain MGAS9429), this protein is Tyrosine recombinase XerS.